The primary structure comprises 206 residues: Small ribosomal subunit protein uS4 (206 aa).

Residues 94 to 157 (RRLDNVVYRL…RSRTYFKNLV (64 aa)) enclose the S4 RNA-binding domain.

The protein belongs to the universal ribosomal protein uS4 family. As to quaternary structure, part of the 30S ribosomal subunit. Contacts protein S5. The interaction surface between S4 and S5 is involved in control of translational fidelity.

One of the primary rRNA binding proteins, it binds directly to 16S rRNA where it nucleates assembly of the body of the 30S subunit. In terms of biological role, with S5 and S12 plays an important role in translational accuracy. This Chloroflexus aurantiacus (strain ATCC 29364 / DSM 637 / Y-400-fl) protein is Small ribosomal subunit protein uS4.